The chain runs to 92 residues: Beta-2-microglobulin (92 aa).

The region spanning 2 to 89 (PQIQVYSRHP…NHVSMDKPMT (88 aa)) is the Ig-like C1-type domain. A disulfide bridge links Cys22 with Cys77.

This sequence belongs to the beta-2-microglobulin family. In terms of assembly, heterodimer of an alpha chain and a beta chain. Beta-2-microglobulin is the beta-chain of major histocompatibility complex class I molecules.

It is found in the secreted. Functionally, component of the class I major histocompatibility complex (MHC). Involved in the presentation of peptide antigens to the immune system. The chain is Beta-2-microglobulin (B2m) from Mus spretus (Western Mediterranean mouse).